The chain runs to 311 residues: Methionyl-tRNA formyltransferase (311 aa).

A (6S)-5,6,7,8-tetrahydrofolate-binding site is contributed by 110–113; sequence SLLP.

The protein belongs to the Fmt family.

The catalysed reaction is L-methionyl-tRNA(fMet) + (6R)-10-formyltetrahydrofolate = N-formyl-L-methionyl-tRNA(fMet) + (6S)-5,6,7,8-tetrahydrofolate + H(+). In terms of biological role, attaches a formyl group to the free amino group of methionyl-tRNA(fMet). The formyl group appears to play a dual role in the initiator identity of N-formylmethionyl-tRNA by promoting its recognition by IF2 and preventing the misappropriation of this tRNA by the elongation apparatus. The chain is Methionyl-tRNA formyltransferase from Streptococcus pneumoniae (strain Taiwan19F-14).